We begin with the raw amino-acid sequence, 275 residues long: Holocytochrome c-type synthase (275 aa).

2 disordered regions span residues 1–59 (MGLS…KTNS) and 83–102 (KENLDPSNLMPPPNQTPAPD). Glycine 2 carries the N-myristoyl glycine lipid modification. Positions 9 to 28 (AASTVQTSTPAASDHQTAAP) are enriched in polar residues. HRM repeat units lie at residues 31–36 (GCPMHE) and 41–46 (GCPVSA). Positions 48–59 (PSDSTCGSKTNS) are enriched in polar residues. Over residues 91 to 102 (LMPPPNQTPAPD) the composition is skewed to pro residues.

It belongs to the cytochrome c-type heme lyase family.

It localises to the mitochondrion inner membrane. Its subcellular location is the membrane. The enzyme catalyses holo-[cytochrome c] = apo-[cytochrome c] + heme b. Its function is as follows. Lyase that catalyzes the covalent linking of the heme group to the cytochrome C apoprotein to produce the mature functional cytochrome. The protein is Holocytochrome c-type synthase of Bos taurus (Bovine).